The chain runs to 177 residues: ATP synthase subunit delta 1 (177 aa).

Belongs to the ATPase delta chain family. F-type ATPases have 2 components, F(1) - the catalytic core - and F(0) - the membrane proton channel. F(1) has five subunits: alpha(3), beta(3), gamma(1), delta(1), epsilon(1). F(0) has three main subunits: a(1), b(2) and c(10-14). The alpha and beta chains form an alternating ring which encloses part of the gamma chain. F(1) is attached to F(0) by a central stalk formed by the gamma and epsilon chains, while a peripheral stalk is formed by the delta and b chains.

It localises to the cell inner membrane. Functionally, f(1)F(0) ATP synthase produces ATP from ADP in the presence of a proton or sodium gradient. F-type ATPases consist of two structural domains, F(1) containing the extramembraneous catalytic core and F(0) containing the membrane proton channel, linked together by a central stalk and a peripheral stalk. During catalysis, ATP synthesis in the catalytic domain of F(1) is coupled via a rotary mechanism of the central stalk subunits to proton translocation. This protein is part of the stalk that links CF(0) to CF(1). It either transmits conformational changes from CF(0) to CF(1) or is implicated in proton conduction. In Vibrio campbellii (strain ATCC BAA-1116), this protein is ATP synthase subunit delta 1.